Here is a 396-residue protein sequence, read N- to C-terminus: Elongation factor Tu (396 aa).

The tr-type G domain maps to 10-206 (KPHCNIGTIG…AVDSYIPQPE (197 aa)). The segment at 19-26 (GHVDHGKT) is G1. 19–26 (GHVDHGKT) serves as a coordination point for GTP. Thr-26 contributes to the Mg(2+) binding site. Residues 60–64 (GITIS) are G2. The G3 stretch occupies residues 81 to 84 (DCPG). Residues 81 to 85 (DCPGH) and 136 to 139 (NKVD) contribute to the GTP site. A G4 region spans residues 136–139 (NKVD). Residues 174 to 176 (SAV) are G5.

It belongs to the TRAFAC class translation factor GTPase superfamily. Classic translation factor GTPase family. EF-Tu/EF-1A subfamily. Monomer.

It localises to the cytoplasm. The enzyme catalyses GTP + H2O = GDP + phosphate + H(+). In terms of biological role, GTP hydrolase that promotes the GTP-dependent binding of aminoacyl-tRNA to the A-site of ribosomes during protein biosynthesis. This is Elongation factor Tu from Rhizorhabdus wittichii (strain DSM 6014 / CCUG 31198 / JCM 15750 / NBRC 105917 / EY 4224 / RW1) (Sphingomonas wittichii).